A 194-amino-acid polypeptide reads, in one-letter code: GTP cyclohydrolase-2 (194 aa).

Position 50-54 (50-54) interacts with GTP; it reads RIHSE. Positions 55, 66, and 68 each coordinate Zn(2+). GTP contacts are provided by residues 94 to 96 and Thr-116; that span reads EGR. Asp-128 serves as the catalytic Proton acceptor. The Nucleophile role is filled by Arg-130. Residues Thr-151 and Lys-156 each contribute to the GTP site.

Belongs to the GTP cyclohydrolase II family. Zn(2+) serves as cofactor.

It carries out the reaction GTP + 4 H2O = 2,5-diamino-6-hydroxy-4-(5-phosphoribosylamino)-pyrimidine + formate + 2 phosphate + 3 H(+). It functions in the pathway cofactor biosynthesis; riboflavin biosynthesis; 5-amino-6-(D-ribitylamino)uracil from GTP: step 1/4. Functionally, catalyzes the conversion of GTP to 2,5-diamino-6-ribosylamino-4(3H)-pyrimidinone 5'-phosphate (DARP), formate and pyrophosphate. This chain is GTP cyclohydrolase-2, found in Helicobacter hepaticus (strain ATCC 51449 / 3B1).